The primary structure comprises 543 residues: ATP synthase subunit alpha (543 aa).

174 to 181 (GDRQTGKT) provides a ligand contact to ATP. Residues 521–543 (VEKKPDVDKAAPVDQEKIVAGEK) form a disordered region.

The protein belongs to the ATPase alpha/beta chains family. F-type ATPases have 2 components, CF(1) - the catalytic core - and CF(0) - the membrane proton channel. CF(1) has five subunits: alpha(3), beta(3), gamma(1), delta(1), epsilon(1). CF(0) has three main subunits: a(1), b(2) and c(9-12). The alpha and beta chains form an alternating ring which encloses part of the gamma chain. CF(1) is attached to CF(0) by a central stalk formed by the gamma and epsilon chains, while a peripheral stalk is formed by the delta and b chains.

Its subcellular location is the cell membrane. The enzyme catalyses ATP + H2O + 4 H(+)(in) = ADP + phosphate + 5 H(+)(out). In terms of biological role, produces ATP from ADP in the presence of a proton gradient across the membrane. The alpha chain is a regulatory subunit. This is ATP synthase subunit alpha from Bifidobacterium longum (strain DJO10A).